Consider the following 300-residue polypeptide: Ribosomal RNA small subunit methyltransferase H (300 aa).

S-adenosyl-L-methionine-binding positions include 46 to 48 (GGH), aspartate 65, phenylalanine 92, aspartate 107, and glutamine 114.

The protein belongs to the methyltransferase superfamily. RsmH family.

It is found in the cytoplasm. The catalysed reaction is cytidine(1402) in 16S rRNA + S-adenosyl-L-methionine = N(4)-methylcytidine(1402) in 16S rRNA + S-adenosyl-L-homocysteine + H(+). Its function is as follows. Specifically methylates the N4 position of cytidine in position 1402 (C1402) of 16S rRNA. The polypeptide is Ribosomal RNA small subunit methyltransferase H (Prochlorococcus marinus (strain MIT 9515)).